We begin with the raw amino-acid sequence, 193 residues long: NADH-quinone oxidoreductase subunit B (193 aa).

4 residues coordinate [4Fe-4S] cluster: C72, C73, C137, and C167.

The protein belongs to the complex I 20 kDa subunit family. NDH-1 is composed of 14 different subunits. Subunits NuoB, C, D, E, F, and G constitute the peripheral sector of the complex. It depends on [4Fe-4S] cluster as a cofactor.

The protein localises to the cell inner membrane. It carries out the reaction a quinone + NADH + 5 H(+)(in) = a quinol + NAD(+) + 4 H(+)(out). NDH-1 shuttles electrons from NADH, via FMN and iron-sulfur (Fe-S) centers, to quinones in the respiratory chain. Couples the redox reaction to proton translocation (for every two electrons transferred, four hydrogen ions are translocated across the cytoplasmic membrane), and thus conserves the redox energy in a proton gradient. The sequence is that of NADH-quinone oxidoreductase subunit B from Brucella anthropi (strain ATCC 49188 / DSM 6882 / CCUG 24695 / JCM 21032 / LMG 3331 / NBRC 15819 / NCTC 12168 / Alc 37) (Ochrobactrum anthropi).